The primary structure comprises 424 residues: Lactate racemase (424 aa).

Ni(II)-pyridinium-3,5-bisthiocarboxylate mononucleotide is bound at residue 72–75; the sequence is DHTR. Active-site proton donor/acceptor residues include H108 and H174. Ni(II)-pyridinium-3,5-bisthiocarboxylate mononucleotide is bound by residues K184 and H200. Residues Q295 and K298 each coordinate substrate.

The protein belongs to the lactate racemase family. In terms of assembly, homodimer. The cofactor is Ni(II)-pyridinium-3,5-bisthiocarboxylate mononucleotide.

The enzyme catalyses (S)-lactate = (R)-lactate. Its activity is regulated as follows. Activation of the apo-enzyme requires the three accessory proteins LarB, LarE and LarC, that are involved in the biosynthesis of the nickel-pincer cofactor of LarA. Inhibited by sulfite that behaves as a mixed inhibitor. Its function is as follows. Catalyzes the interconversion between the D- and L-isomers of lactate. May act as a rescue enzyme to ensure D-lactate production in physiological conditions where its production by the D-lactate dehydrogenase LdhD is not sufficient. D-Lactate is absolutely required for growth of L.plantarum and is an essential component of the cell wall peptidoglycan in this species, where it is incorporated as the last residue of the muramoyl-pentadepsipeptide peptidoglycan precursor; its incorporation confers high level of vancomycin resistance. This chain is Lactate racemase, found in Lactiplantibacillus plantarum (strain ATCC BAA-793 / NCIMB 8826 / WCFS1) (Lactobacillus plantarum).